Reading from the N-terminus, the 729-residue chain is MLYKGDTLYLDWLEDGIAELVFDAPGSVNKLDTATVASLGEAIGVLEQQSDLKGLLLRSNKAAFIVGADITEFLSLFLVPEEQLSQWLHFANSVFNRLEDLPVPTIAAVNGYALGGGCECVLATDYRLATPDLRIGLPETKLGIMPGFGGSVRMPRMLGADSALEIIAAGKDVGADQALKIGLVDGVVKAEKLVEGAMAILRQAINGDLDWKAKRQPKLEPLKLSKIEATMSFTIAKGMVAQTAGKHYPAPITAVKTIEAAARFGREEALNLENKSFVPLAHTNEARALVGIFLNDQYVKGKAKKLTKDVETPKQAAVLGAGIMGGGIAYQSAWKGVPVVMKDINDKSLTLGMTEAAKLLNKQLERGKIDGLKLAGVISTIHPTLDYAGFDRVDIVVEAVVENPKVKKAVLAETEQKVRPDTVLASNTSTIPISELANALERPENFCGMHFFNPVHRMPLVEIIRGEKSSDETIAKVVAWASKMGKTPIVVNDCPGFFVNRVLFPYFAGFSQLLRDGADFRKIDKVMEKQFGWPMGPAYLLDVVGIDTAHHAQAVMAAGFPQRMQKDYRDAIDALFDANRFGQKNGLGFWRYKEDSKGKPKKEEDAAVDDLLAEVSQPKRDFSEEEIIARMMIPMVNEVVRCLEEGIIATPAEADMALVYGLGFPPFHGGAFRWLDTLGSAKYLDMAQQYQHLGPLYEVPEGLRNKARHNEPYYPPVEPARPVGDLKTA.

The tract at residues Met1–Lys189 is enoyl-CoA hydratase/isomerase. Residue Asp296 participates in substrate binding. Residues Glu311 to Ala729 form a 3-hydroxyacyl-CoA dehydrogenase region. NAD(+) is bound by residues Met324, Asp343, Val400–Glu402, Lys407, and Ser429. His450 acts as the For 3-hydroxyacyl-CoA dehydrogenase activity in catalysis. Residue Asn453 coordinates NAD(+). Positions 500 and 660 each coordinate substrate. The interval Arg708–Ala729 is disordered.

In the N-terminal section; belongs to the enoyl-CoA hydratase/isomerase family. This sequence in the C-terminal section; belongs to the 3-hydroxyacyl-CoA dehydrogenase family. Heterotetramer of two alpha chains (FadB) and two beta chains (FadA).

The enzyme catalyses a (3S)-3-hydroxyacyl-CoA + NAD(+) = a 3-oxoacyl-CoA + NADH + H(+). The catalysed reaction is a (3S)-3-hydroxyacyl-CoA = a (2E)-enoyl-CoA + H2O. It carries out the reaction a 4-saturated-(3S)-3-hydroxyacyl-CoA = a (3E)-enoyl-CoA + H2O. It catalyses the reaction (3S)-3-hydroxybutanoyl-CoA = (3R)-3-hydroxybutanoyl-CoA. The enzyme catalyses a (3Z)-enoyl-CoA = a 4-saturated (2E)-enoyl-CoA. The catalysed reaction is a (3E)-enoyl-CoA = a 4-saturated (2E)-enoyl-CoA. Its pathway is lipid metabolism; fatty acid beta-oxidation. Its function is as follows. Involved in the aerobic and anaerobic degradation of long-chain fatty acids via beta-oxidation cycle. Catalyzes the formation of 3-oxoacyl-CoA from enoyl-CoA via L-3-hydroxyacyl-CoA. It can also use D-3-hydroxyacyl-CoA and cis-3-enoyl-CoA as substrate. The protein is Fatty acid oxidation complex subunit alpha of Escherichia coli O17:K52:H18 (strain UMN026 / ExPEC).